The primary structure comprises 420 residues: Gamma-glutamyl phosphate reductase (420 aa).

This sequence belongs to the gamma-glutamyl phosphate reductase family.

The protein localises to the cytoplasm. It carries out the reaction L-glutamate 5-semialdehyde + phosphate + NADP(+) = L-glutamyl 5-phosphate + NADPH + H(+). It participates in amino-acid biosynthesis; L-proline biosynthesis; L-glutamate 5-semialdehyde from L-glutamate: step 2/2. Its function is as follows. Catalyzes the NADPH-dependent reduction of L-glutamate 5-phosphate into L-glutamate 5-semialdehyde and phosphate. The product spontaneously undergoes cyclization to form 1-pyrroline-5-carboxylate. The chain is Gamma-glutamyl phosphate reductase from Streptococcus pneumoniae (strain 70585).